The sequence spans 75 residues: Small ribosomal subunit protein bS16 (75 aa).

Belongs to the bacterial ribosomal protein bS16 family.

The chain is Small ribosomal subunit protein bS16 from Nitratiruptor sp. (strain SB155-2).